Consider the following 589-residue polypeptide: Vomeromodulin (589 aa).

A signal peptide spans 1-29 (MWVLQALAIMLSIQAGVLDLVEVPPVVRS). Disordered stretches follow at residues 49-71 (GLND…SRGG) and 146-170 (LLGK…GLGQ). 2 N-linked (GlcNAc...) asparagine glycosylation sites follow: N419 and N437.

N-glycosylated. The N-glycans consist mainly of complex sialylated and fucosylated biantennary structures. As to expression, abundant in the lateral nasal glands. Also present in the posterior septal and vomeronasal glands.

It is found in the secreted. This is Vomeromodulin from Rattus norvegicus (Rat).